Consider the following 2104-residue polypeptide: Transmembrane matrix receptor MUP-4 (2104 aa).

The first 15 residues, 1 to 15 (MRWVPLVLLPLIASA), serve as a signal peptide directing secretion. Over 16 to 1860 (ATTYQHRQTY…FCETAPSNLP (1845 aa)) the chain is Extracellular. EGF-like domains lie at 71 to 110 (VVNECARPSLNACHKDAQCVDLAEGYTCRCNSGFADTSPD), 122 to 163 (TTNE…VSTS), and 175 to 213 (SVNECTNGEADCSNNADCFDRADGYECKCRPGFVDASPN). 6 cysteine pairs are disulfide-bonded: Cys-75/Cys-89, Cys-83/Cys-98, Cys-126/Cys-142, Cys-136/Cys-151, Cys-179/Cys-192, and Cys-186/Cys-201. The region spanning 220–265 (RVCNKPKAPEYYGQQSRQPQCSEGSGCGPNEECRFNTAGEKVCQCR) is the WR1 domain. 3 EGF-like domains span residues 278–315 (VFSQCEQANECDRNAFCSNTYDGPKCQCKDGFLDVSPD), 327–360 (VRNECADGSHDCSHQAACQDTPTGYICSCNSNCI), and 377–416 (AANQCSDKSLNSCDENADCVQLPDGYTCKCFAGYVDVSSN). Disulfide bonds link Cys-282–Cys-294, Cys-288–Cys-303, Cys-331–Cys-344, Cys-338–Cys-353, Cys-355–Cys-359, Cys-381–Cys-395, and Cys-389–Cys-404. The region spanning 437–612 (DLVFLIDGSG…DLNTRLRSAI (176 aa)) is the VWFA domain. 2 N-linked (GlcNAc...) asparagine glycosylation sites follow: Asn-494 and Asn-556. 2 consecutive EGF-like domains span residues 728-772 (SNDE…NKCE) and 819-857 (LIDECAAGVADCDPNAKCTDTDESYICTCNEGFLDKSPE). 21 cysteine pairs are disulfide-bonded: Cys-732-Cys-746, Cys-740-Cys-756, Cys-758-Cys-771, Cys-823-Cys-836, Cys-830-Cys-845, Cys-873-Cys-886, Cys-880-Cys-895, Cys-923-Cys-937, Cys-931-Cys-946, Cys-972-Cys-985, Cys-979-Cys-995, Cys-1020-Cys-1034, Cys-1028-Cys-1046, Cys-1075-Cys-1089, Cys-1083-Cys-1098, Cys-1125-Cys-1139, Cys-1133-Cys-1148, Cys-1173-Cys-1187, Cys-1181-Cys-1196, Cys-1219-Cys-1233, and Cys-1227-Cys-1242. The EGF-like 9; calcium-binding domain maps to 869 to 907 (QRNECLDGTHNCSMNADCIDLPDGFLCRCKEDFVDISPN). N-linked (GlcNAc...) asparagine glycosylation occurs at Asn-879. 7 consecutive EGF-like domains span residues 919–958 (LVNECLITGGHNCHEHAICIDTRDSYKCQCKEGYVDHDEL), 968–1007 (LNQICESGKHECDKNARCVEKGANDYECVCNAGFIDKSPL), 1016–1058 (VEPI…VGAV), 1071–1110 (LVNECLSASLNSCDAAATCIDLDDGYTCKCPLGSKDESPV), 1121–1160 (LVNECNIPHLNNCSHFATCIDLEEGYECKCKPEYHDQKPE), 1169–1208 (IINECLAENLNDCSPNAMCIDKIDGYDCKCKAPFQDEMPS), and 1215–1254 (RFDECADPKDNDCDKHALCIDTDDSYTCQCKEGFFDEISD). A glycan (N-linked (GlcNAc...) asparagine) is linked at Asn-1037. An N-linked (GlcNAc...) asparagine glycan is attached at Asn-1132. Residues Asn-1271, Asn-1403, and Asn-1576 are each glycosylated (N-linked (GlcNAc...) asparagine). 2 consecutive SEA domains span residues 1322–1444 (PTTS…DDAD) and 1495–1620 (AVES…PEQL). EGF-like domains follow at residues 1622–1658 (PFSNCYHSDCHPDAICKEVGKGYTCTCPDGFRDLNPS), 1669–1705 (GVNECEKPELNECSPHARCIDLDYLYKCECIRPYVNS), and 1717–1754 (SIDYCQDVNYCPLNSTCVNVDEQARCDCKPGFVDLRKS). 11 cysteine pairs are disulfide-bonded: Cys-1626–Cys-1637, Cys-1631–Cys-1646, Cys-1673–Cys-1687, Cys-1681–Cys-1696, Cys-1721–Cys-1733, Cys-1727–Cys-1742, Cys-1776–Cys-1789, Cys-1783–Cys-1798, Cys-1821–Cys-1830, Cys-1824–Cys-1841, and Cys-1843–Cys-1852. Asn-1730 and Asn-1782 each carry an N-linked (GlcNAc...) asparagine glycan. The region spanning 1772 to 1810 (DIDECALGLHNCSAAAICIDKKIGYECQCQEGYEDGNPS) is the EGF-like 20; calcium-binding domain. The EGF-like 21 domain occupies 1817 to 1853 (AASLCGLCNGHGDCIHDALSSNVTCACLDGYTGQFCE). An N-linked (GlcNAc...) asparagine glycan is attached at Asn-1838. Residues 1861 to 1881 (LILMTLLALLFLLLTLLCCLY) traverse the membrane as a helical segment. The Cytoplasmic segment spans residues 1882–2104 (MCARCRCFGA…TTKAEEVNYF (223 aa)). Over residues 2031–2040 (SGAMMSSASG) the composition is skewed to low complexity. The segment at 2031 to 2104 (SGAMMSSASG…TTKAEEVNYF (74 aa)) is disordered. 2 stretches are compositionally biased toward basic and acidic residues: residues 2062 to 2076 (VYDRTTRTNQSHDFE) and 2083 to 2104 (TGTERSKREFVTTTKAEEVNYF).

As to expression, abundant at hypodermal cell-matrix junctions overlying muscle of threefold embryos. Expression continues in body wall muscle in larvae and adults and is also detected in other regions where cells show mechanical attachment to the hypodermis including the inner surface of the pharynx, overlying anal and intestinal muscles, overlying vulval and uterine sex muscles, male tail muscle attachment zones and the six mechanosensory neurons (at protein level).

It localises to the cell junction. Its subcellular location is the hemidesmosome. The protein localises to the cytoplasm. The protein resides in the cytoskeleton. It is found in the cell membrane. In terms of biological role, required for junctional attachments between hypodermis and muscle, and between the apical epithelial surface and the cuticular matrix. Essential for enclosure of the embryo by the hypodermis, hypodermal integrity, embryo elongation, and maintenance of hypodermal morphology in fully elongated embryos. The chain is Transmembrane matrix receptor MUP-4 from Caenorhabditis elegans.